A 338-amino-acid polypeptide reads, in one-letter code: Ketol-acid reductoisomerase (NADP(+)) (338 aa).

A KARI N-terminal Rossmann domain is found at 1-181 (MKVFYDKDCD…GGGRTGIIET (181 aa)). Residues 24 to 27 (YGSQ), Arg-47, Ser-50, Thr-52, and 82 to 85 (DEFQ) each bind NADP(+). The active site involves His-107. Residue Gly-133 participates in NADP(+) binding. Positions 182 to 327 (TFKDETETDL…EQLRSMMPWI (146 aa)) constitute a KARI C-terminal knotted domain. Residues Asp-190, Glu-194, Glu-226, and Glu-230 each contribute to the Mg(2+) site. Ser-251 contributes to the substrate binding site.

The protein belongs to the ketol-acid reductoisomerase family. It depends on Mg(2+) as a cofactor.

The catalysed reaction is (2R)-2,3-dihydroxy-3-methylbutanoate + NADP(+) = (2S)-2-acetolactate + NADPH + H(+). The enzyme catalyses (2R,3R)-2,3-dihydroxy-3-methylpentanoate + NADP(+) = (S)-2-ethyl-2-hydroxy-3-oxobutanoate + NADPH + H(+). The protein operates within amino-acid biosynthesis; L-isoleucine biosynthesis; L-isoleucine from 2-oxobutanoate: step 2/4. Its pathway is amino-acid biosynthesis; L-valine biosynthesis; L-valine from pyruvate: step 2/4. Functionally, involved in the biosynthesis of branched-chain amino acids (BCAA). Catalyzes an alkyl-migration followed by a ketol-acid reduction of (S)-2-acetolactate (S2AL) to yield (R)-2,3-dihydroxy-isovalerate. In the isomerase reaction, S2AL is rearranged via a Mg-dependent methyl migration to produce 3-hydroxy-3-methyl-2-ketobutyrate (HMKB). In the reductase reaction, this 2-ketoacid undergoes a metal-dependent reduction by NADPH to yield (R)-2,3-dihydroxy-isovalerate. This is Ketol-acid reductoisomerase (NADP(+)) from Pseudomonas putida (strain ATCC 700007 / DSM 6899 / JCM 31910 / BCRC 17059 / LMG 24140 / F1).